We begin with the raw amino-acid sequence, 546 residues long: Chaperonin GroEL (546 aa).

Residues 30 to 33 (TLGP), lysine 51, 87 to 91 (DGTTT), glycine 415, 479 to 481 (NAA), and aspartate 495 each bind ATP. The interval 526–546 (KKGDSAPAGGGMGDMGGMGMM) is disordered. The span at 533 to 546 (AGGGMGDMGGMGMM) shows a compositional bias: gly residues.

The protein belongs to the chaperonin (HSP60) family. In terms of assembly, forms a cylinder of 14 subunits composed of two heptameric rings stacked back-to-back. Interacts with the co-chaperonin GroES.

It is found in the cytoplasm. It carries out the reaction ATP + H2O + a folded polypeptide = ADP + phosphate + an unfolded polypeptide.. In terms of biological role, together with its co-chaperonin GroES, plays an essential role in assisting protein folding. The GroEL-GroES system forms a nano-cage that allows encapsulation of the non-native substrate proteins and provides a physical environment optimized to promote and accelerate protein folding. The sequence is that of Chaperonin GroEL from Thioalkalivibrio sulfidiphilus (strain HL-EbGR7).